A 387-amino-acid chain; its full sequence is Prostatic acid phosphatase (387 aa).

The signal sequence occupies residues 1–34; the sequence is MRNAALLMTRATSLRLSLLLLLSFLPDLDGGVRA. Substrate is bound at residue Arg45. The active-site Nucleophile is the His46. Arg49 is a substrate binding site. N-linked (GlcNAc...) asparagine glycosylation occurs at Asn96. Residue Arg113 participates in substrate binding. 3 disulfide bridges follow: Cys163–Cys374, Cys217–Cys315, and Cys349–Cys353. A glycan (N-linked (GlcNAc...) asparagine) is linked at Asn222. Residue His291 participates in substrate binding. Asp292 serves as the catalytic Proton donor. A glycan (N-linked (GlcNAc...) asparagine) is linked at Asn335.

The protein belongs to the histidine acid phosphatase family. In terms of assembly, homodimer; dimer formation is required for phosphatase activity.

It localises to the secreted. It catalyses the reaction a phosphate monoester + H2O = an alcohol + phosphate. The enzyme catalyses 1-(9Z-octadecenoyl)-sn-glycero-3-phosphate + H2O = 1-(9Z-octadecenoyl)-sn-glycerol + phosphate. The catalysed reaction is O-phospho-L-tyrosyl-[protein] + H2O = L-tyrosyl-[protein] + phosphate. Functionally, a non-specific tyrosine phosphatase that dephosphorylates a diverse number of substrates under acidic conditions (pH 4-6) including alkyl, aryl, and acyl orthophosphate monoesters and phosphorylated proteins. Has lipid phosphatase activity and inactivates lysophosphatidic acid in seminal plasma. This is Prostatic acid phosphatase (ACP3) from Bos taurus (Bovine).